The chain runs to 198 residues: Small ribosomal subunit protein uS4c (198 aa).

The tract at residues 17–40 (TLPGLTSKRPKNRKDSMNRSSSRK) is disordered. In terms of domain architecture, S4 RNA-binding spans 88 to 154 (MRLDKSFSIG…IKKNIDLFQR (67 aa)).

Belongs to the universal ribosomal protein uS4 family. Part of the 30S ribosomal subunit. Contacts protein S5. The interaction surface between S4 and S5 is involved in control of translational fidelity.

It localises to the plastid. The protein resides in the chloroplast. In terms of biological role, one of the primary rRNA binding proteins, it binds directly to 16S rRNA where it nucleates assembly of the body of the 30S subunit. Its function is as follows. With S5 and S12 plays an important role in translational accuracy. The chain is Small ribosomal subunit protein uS4c (rps4) from Pinus thunbergii (Japanese black pine).